Here is a 254-residue protein sequence, read N- to C-terminus: Imidazole glycerol phosphate synthase subunit HisF (254 aa).

Active-site residues include D13 and D132.

The protein belongs to the HisA/HisF family. As to quaternary structure, heterodimer of HisH and HisF.

It localises to the cytoplasm. It catalyses the reaction 5-[(5-phospho-1-deoxy-D-ribulos-1-ylimino)methylamino]-1-(5-phospho-beta-D-ribosyl)imidazole-4-carboxamide + L-glutamine = D-erythro-1-(imidazol-4-yl)glycerol 3-phosphate + 5-amino-1-(5-phospho-beta-D-ribosyl)imidazole-4-carboxamide + L-glutamate + H(+). It functions in the pathway amino-acid biosynthesis; L-histidine biosynthesis; L-histidine from 5-phospho-alpha-D-ribose 1-diphosphate: step 5/9. Functionally, IGPS catalyzes the conversion of PRFAR and glutamine to IGP, AICAR and glutamate. The HisF subunit catalyzes the cyclization activity that produces IGP and AICAR from PRFAR using the ammonia provided by the HisH subunit. This chain is Imidazole glycerol phosphate synthase subunit HisF, found in Sulfurovum sp. (strain NBC37-1).